The primary structure comprises 200 residues: Pyridoxal 5'-phosphate synthase subunit PdxT (200 aa).

50-52 (GES) contributes to the L-glutamine binding site. The active-site Nucleophile is Cys82. Residues Arg110 and 138–139 (IR) each bind L-glutamine. Residues His174 and Glu176 each act as charge relay system in the active site.

It belongs to the glutaminase PdxT/SNO family. As to quaternary structure, in the presence of PdxS, forms a dodecamer of heterodimers. Only shows activity in the heterodimer.

The enzyme catalyses aldehydo-D-ribose 5-phosphate + D-glyceraldehyde 3-phosphate + L-glutamine = pyridoxal 5'-phosphate + L-glutamate + phosphate + 3 H2O + H(+). The catalysed reaction is L-glutamine + H2O = L-glutamate + NH4(+). It participates in cofactor biosynthesis; pyridoxal 5'-phosphate biosynthesis. Catalyzes the hydrolysis of glutamine to glutamate and ammonia as part of the biosynthesis of pyridoxal 5'-phosphate. The resulting ammonia molecule is channeled to the active site of PdxS. This Oceanobacillus iheyensis (strain DSM 14371 / CIP 107618 / JCM 11309 / KCTC 3954 / HTE831) protein is Pyridoxal 5'-phosphate synthase subunit PdxT.